Here is a 558-residue protein sequence, read N- to C-terminus: Putative polypeptide N-acetylgalactosaminyltransferase 13 (558 aa).

The Cytoplasmic portion of the chain corresponds to Met-1 to His-12. Residues Cys-13–Ile-32 form a helical; Signal-anchor for type II membrane protein membrane-spanning segment. Residues Arg-33 to Thr-558 lie on the Lumenal side of the membrane. 2 N-linked (GlcNAc...) asparagine glycosylation sites follow: Asn-48 and Asn-111. Intrachain disulfides connect Cys-97/Cys-335, Cys-326/Cys-412, Cys-445/Cys-460, and Cys-484/Cys-498. Residues Glu-109–Arg-225 form a catalytic subdomain A region. Substrate contacts are provided by Asp-150 and Arg-186. A Mn(2+)-binding site is contributed by Asp-209. Ser-210 contacts substrate. His-211 is a binding site for Mn(2+). Positions Pro-281–Arg-343 are catalytic subdomain B. Position 312 (Trp-312) interacts with substrate. A Mn(2+)-binding site is contributed by His-340. Substrate contacts are provided by Arg-343 and His-346. The 135-residue stretch at Val-422–Gly-556 folds into the Ricin B-type lectin domain. The N-linked (GlcNAc...) asparagine glycan is linked to Asn-501. Cys-525 and Cys-539 form a disulfide bridge.

It belongs to the glycosyltransferase 2 family. GalNAc-T subfamily. The cofactor is Mn(2+). As to expression, during embryonic stages 16-17, very weak expression in the midgut.

The protein resides in the golgi apparatus membrane. It catalyses the reaction L-seryl-[protein] + UDP-N-acetyl-alpha-D-galactosamine = a 3-O-[N-acetyl-alpha-D-galactosaminyl]-L-seryl-[protein] + UDP + H(+). It carries out the reaction L-threonyl-[protein] + UDP-N-acetyl-alpha-D-galactosamine = a 3-O-[N-acetyl-alpha-D-galactosaminyl]-L-threonyl-[protein] + UDP + H(+). Its pathway is protein modification; protein glycosylation. May catalyze the initial reaction in O-linked oligosaccharide biosynthesis, the transfer of an N-acetyl-D-galactosamine residue to a serine or threonine residue on the protein receptor. This is Putative polypeptide N-acetylgalactosaminyltransferase 13 (pgant13) from Drosophila melanogaster (Fruit fly).